Here is a 686-residue protein sequence, read N- to C-terminus: Methionine--tRNA ligase (686 aa).

Positions 15-25 match the 'HIGH' region motif; that stretch reads PYTNGPIHIGH. The Zn(2+) site is built by cysteine 147, cysteine 150, cysteine 160, and cysteine 163. The 'KMSKS' region signature appears at 336 to 340; it reads KLSTS. An ATP-binding site is contributed by threonine 339. Positions 584-686 constitute a tRNA-binding domain; the sequence is DFAKMDLRVG…AGVGNGEGIN (103 aa).

Belongs to the class-I aminoacyl-tRNA synthetase family. MetG type 1 subfamily. Homodimer. Zn(2+) serves as cofactor.

Its subcellular location is the cytoplasm. It carries out the reaction tRNA(Met) + L-methionine + ATP = L-methionyl-tRNA(Met) + AMP + diphosphate. Functionally, is required not only for elongation of protein synthesis but also for the initiation of all mRNA translation through initiator tRNA(fMet) aminoacylation. The protein is Methionine--tRNA ligase of Flavobacterium psychrophilum (strain ATCC 49511 / DSM 21280 / CIP 103535 / JIP02/86).